We begin with the raw amino-acid sequence, 897 residues long: uncharacterized protein (897 aa).

Disordered regions lie at residues 25 to 89 and 106 to 168; these read RLQD…TRKR and PTRL…TPPS. 3 stretches are compositionally biased toward low complexity: residues 32 to 44, 57 to 68, and 106 to 142; these read SSSP…SSSS, SLQNSQSSSYSL, and PTRL…SSVS. The Helicase ATP-binding domain occupies 263-446; it reads SMEQSSKCGG…YSLLKFLRIK (184 aa). Residue 276 to 283 coordinates ATP; the sequence is DDMGLGKT. The DEAH box motif lies at 397–400; it reads DEAH. The RING-type zinc finger occupies 606–655; that stretch reads CSVCLDPCLAPVFIIPCGHFTCQECMSMLVGQKYGSSSTSTIIAKCPMCR. One can recognise a Helicase C-terminal domain in the interval 727-890; that stretch reads QARQTILDII…LSRLDKEELL (164 aa).

This sequence belongs to the SNF2/RAD54 helicase family.

The protein localises to the cytoplasm. It is found in the nucleus. This is an uncharacterized protein from Schizosaccharomyces pombe (strain 972 / ATCC 24843) (Fission yeast).